The sequence spans 431 residues: Gamma-glutamyl phosphate reductase (431 aa).

It belongs to the gamma-glutamyl phosphate reductase family.

Its subcellular location is the cytoplasm. The enzyme catalyses L-glutamate 5-semialdehyde + phosphate + NADP(+) = L-glutamyl 5-phosphate + NADPH + H(+). It participates in amino-acid biosynthesis; L-proline biosynthesis; L-glutamate 5-semialdehyde from L-glutamate: step 2/2. In terms of biological role, catalyzes the NADPH-dependent reduction of L-glutamate 5-phosphate into L-glutamate 5-semialdehyde and phosphate. The product spontaneously undergoes cyclization to form 1-pyrroline-5-carboxylate. This is Gamma-glutamyl phosphate reductase from Trichodesmium erythraeum (strain IMS101).